A 332-amino-acid polypeptide reads, in one-letter code: uncharacterized protein (332 aa).

It belongs to the bacterial solute-binding protein 1 family. WtpA subfamily.

This is an uncharacterized protein from Methanococcus maripaludis (strain DSM 14266 / JCM 13030 / NBRC 101832 / S2 / LL).